Here is a 148-residue protein sequence, read N- to C-terminus: Putative nickel-responsive regulator (148 aa).

Ni(2+) is bound by residues H88, H99, H101, and C107.

Belongs to the transcriptional regulatory CopG/NikR family. Ni(2+) is required as a cofactor.

Its function is as follows. Transcriptional regulator. The protein is Putative nickel-responsive regulator of Helicobacter pylori (strain HPAG1).